An 89-amino-acid chain; its full sequence is Small ribosomal subunit protein uS15 (89 aa).

The tract at residues 1–22 (MPLSKEQKQEVMEKYKLHEHDT) is disordered.

The protein belongs to the universal ribosomal protein uS15 family. In terms of assembly, part of the 30S ribosomal subunit. Forms a bridge to the 50S subunit in the 70S ribosome, contacting the 23S rRNA.

Its function is as follows. One of the primary rRNA binding proteins, it binds directly to 16S rRNA where it helps nucleate assembly of the platform of the 30S subunit by binding and bridging several RNA helices of the 16S rRNA. Functionally, forms an intersubunit bridge (bridge B4) with the 23S rRNA of the 50S subunit in the ribosome. This chain is Small ribosomal subunit protein uS15, found in Natranaerobius thermophilus (strain ATCC BAA-1301 / DSM 18059 / JW/NM-WN-LF).